Here is a 495-residue protein sequence, read N- to C-terminus: UDP-N-acetylmuramoyl-L-alanyl-D-glutamate--2,6-diaminopimelate ligase (495 aa).

UDP-N-acetyl-alpha-D-muramoyl-L-alanyl-D-glutamate-binding positions include L27, S29, and 44-46; that span reads HQT. 116-122 is a binding site for ATP; it reads GTNGKTT. UDP-N-acetyl-alpha-D-muramoyl-L-alanyl-D-glutamate is bound by residues N157, 158–159, S185, Q191, and R193; that span reads TT. K225 is modified (N6-carboxylysine). Residues R390, 414-417, G465, and E469 contribute to the meso-2,6-diaminopimelate site; that span reads DNPR. The Meso-diaminopimelate recognition motif signature appears at 414–417; it reads DNPR.

The protein belongs to the MurCDEF family. MurE subfamily. The cofactor is Mg(2+). Carboxylation is probably crucial for Mg(2+) binding and, consequently, for the gamma-phosphate positioning of ATP.

The protein resides in the cytoplasm. It catalyses the reaction UDP-N-acetyl-alpha-D-muramoyl-L-alanyl-D-glutamate + meso-2,6-diaminopimelate + ATP = UDP-N-acetyl-alpha-D-muramoyl-L-alanyl-gamma-D-glutamyl-meso-2,6-diaminopimelate + ADP + phosphate + H(+). It participates in cell wall biogenesis; peptidoglycan biosynthesis. Functionally, catalyzes the addition of meso-diaminopimelic acid to the nucleotide precursor UDP-N-acetylmuramoyl-L-alanyl-D-glutamate (UMAG) in the biosynthesis of bacterial cell-wall peptidoglycan. The sequence is that of UDP-N-acetylmuramoyl-L-alanyl-D-glutamate--2,6-diaminopimelate ligase from Photorhabdus laumondii subsp. laumondii (strain DSM 15139 / CIP 105565 / TT01) (Photorhabdus luminescens subsp. laumondii).